Reading from the N-terminus, the 280-residue chain is Elongation factor Ts (280 aa).

Positions 79–82 (TDFV) are involved in Mg(2+) ion dislocation from EF-Tu.

The protein belongs to the EF-Ts family.

The protein resides in the cytoplasm. Its function is as follows. Associates with the EF-Tu.GDP complex and induces the exchange of GDP to GTP. It remains bound to the aminoacyl-tRNA.EF-Tu.GTP complex up to the GTP hydrolysis stage on the ribosome. The sequence is that of Elongation factor Ts from Vibrio vulnificus (strain CMCP6).